A 473-amino-acid chain; its full sequence is Trigger factor (473 aa).

Residues 174-261 (GDIAVVSFKG…LKDLKEKELP (88 aa)) enclose the PPIase FKBP-type domain. A disordered region spans residues 442–473 (ATKLTTKTTTKATTKKGVKTKSKPKVNKKEKN). Over residues 444–453 (KLTTKTTTKA) the composition is skewed to low complexity. A compositionally biased stretch (basic residues) spans 454–467 (TTKKGVKTKSKPKV).

Belongs to the FKBP-type PPIase family. Tig subfamily.

The protein localises to the cytoplasm. The enzyme catalyses [protein]-peptidylproline (omega=180) = [protein]-peptidylproline (omega=0). Its function is as follows. Involved in protein export. Acts as a chaperone by maintaining the newly synthesized protein in an open conformation. Functions as a peptidyl-prolyl cis-trans isomerase. The chain is Trigger factor from Prochlorococcus marinus subsp. pastoris (strain CCMP1986 / NIES-2087 / MED4).